We begin with the raw amino-acid sequence, 274 residues long: ATP synthase subunit a (274 aa).

The next 5 helical transmembrane spans lie at 43–63 (TLNIDSLFFSVVLGLAFLLVF), 103–123 (VIAPLALTVFVWVLLMNMMDL), 149–169 (DVSITLSMALGVFILIIFYSI), 223–243 (LIFILIAGLLPWWSQWMLSVP), and 245–265 (AIFHILIITLQAFIFMVLTIV).

The protein belongs to the ATPase A chain family. As to quaternary structure, F-type ATPases have 2 components, CF(1) - the catalytic core - and CF(0) - the membrane proton channel. CF(1) has five subunits: alpha(3), beta(3), gamma(1), delta(1), epsilon(1). CF(0) has three main subunits: a(1), b(2) and c(9-12). The alpha and beta chains form an alternating ring which encloses part of the gamma chain. CF(1) is attached to CF(0) by a central stalk formed by the gamma and epsilon chains, while a peripheral stalk is formed by the delta and b chains.

It is found in the cell inner membrane. Key component of the proton channel; it plays a direct role in the translocation of protons across the membrane. In Yersinia pestis bv. Antiqua (strain Angola), this protein is ATP synthase subunit a.